The primary structure comprises 495 residues: Glutamyl-tRNA(Gln) amidotransferase subunit A (495 aa).

Catalysis depends on charge relay system residues K79 and S159. The active-site Acyl-ester intermediate is S183.

This sequence belongs to the amidase family. GatA subfamily. As to quaternary structure, heterotrimer of A, B and C subunits.

It carries out the reaction L-glutamyl-tRNA(Gln) + L-glutamine + ATP + H2O = L-glutaminyl-tRNA(Gln) + L-glutamate + ADP + phosphate + H(+). In terms of biological role, allows the formation of correctly charged Gln-tRNA(Gln) through the transamidation of misacylated Glu-tRNA(Gln) in organisms which lack glutaminyl-tRNA synthetase. The reaction takes place in the presence of glutamine and ATP through an activated gamma-phospho-Glu-tRNA(Gln). This Gluconobacter oxydans (strain 621H) (Gluconobacter suboxydans) protein is Glutamyl-tRNA(Gln) amidotransferase subunit A.